Consider the following 269-residue polypeptide: GTP cyclohydrolase FolE2 (269 aa).

The protein belongs to the GTP cyclohydrolase IV family.

The enzyme catalyses GTP + H2O = 7,8-dihydroneopterin 3'-triphosphate + formate + H(+). Its pathway is cofactor biosynthesis; 7,8-dihydroneopterin triphosphate biosynthesis; 7,8-dihydroneopterin triphosphate from GTP: step 1/1. In terms of biological role, converts GTP to 7,8-dihydroneopterin triphosphate. This is GTP cyclohydrolase FolE2 from Burkholderia multivorans (strain ATCC 17616 / 249).